Here is a 556-residue protein sequence, read N- to C-terminus: Arginine--tRNA ligase (556 aa).

Residues 117–127 (PNVAKQMHVGH) carry the 'HIGH' region motif.

It belongs to the class-I aminoacyl-tRNA synthetase family. In terms of assembly, monomer.

It localises to the cytoplasm. It catalyses the reaction tRNA(Arg) + L-arginine + ATP = L-arginyl-tRNA(Arg) + AMP + diphosphate. The chain is Arginine--tRNA ligase from Cutibacterium acnes (strain DSM 16379 / KPA171202) (Propionibacterium acnes).